A 352-amino-acid polypeptide reads, in one-letter code: Histidine biosynthesis bifunctional protein HisB (352 aa).

The tract at residues 1 to 164 is histidinol-phosphatase; sequence MSQKILFIDR…EIENEILSSF (164 aa). The active-site Nucleophile is D9. Mg(2+)-binding residues include D9 and D11. The active-site Proton donor is the D11. Positions 93, 95, 101, and 103 each coordinate Zn(2+). Residue D130 coordinates Mg(2+). The tract at residues 165–352 is imidazoleglycerol-phosphate dehydratase; that stretch reads RSASYQRTTK…ENLASSKGVI (188 aa).

It in the N-terminal section; belongs to the histidinol-phosphatase family. The protein in the C-terminal section; belongs to the imidazoleglycerol-phosphate dehydratase family. It depends on Mg(2+) as a cofactor. Zn(2+) serves as cofactor.

The protein localises to the cytoplasm. It catalyses the reaction D-erythro-1-(imidazol-4-yl)glycerol 3-phosphate = 3-(imidazol-4-yl)-2-oxopropyl phosphate + H2O. The enzyme catalyses L-histidinol phosphate + H2O = L-histidinol + phosphate. It functions in the pathway amino-acid biosynthesis; L-histidine biosynthesis; L-histidine from 5-phospho-alpha-D-ribose 1-diphosphate: step 6/9. It participates in amino-acid biosynthesis; L-histidine biosynthesis; L-histidine from 5-phospho-alpha-D-ribose 1-diphosphate: step 8/9. This chain is Histidine biosynthesis bifunctional protein HisB, found in Campylobacter jejuni subsp. jejuni serotype O:6 (strain 81116 / NCTC 11828).